The sequence spans 269 residues: Cytochrome c oxidase subunit 3 (269 aa).

Transmembrane regions (helical) follow at residues 21-41 (PWPI…ALTM), 45-65 (IGHM…ATLW), 90-110 (GFLL…WAYF), 138-160 (PLLN…HGLV), 167-187 (ALSG…CQYI), 205-225 (FYAG…MLGI), and 247-267 (VLYC…FYWW).

Belongs to the cytochrome c oxidase subunit 3 family. As to quaternary structure, component of the cytochrome c oxidase (complex IV, CIV), a multisubunit enzyme composed of a catalytic core of 3 subunits and several supernumerary subunits. The complex exists as a monomer or a dimer and forms supercomplexes (SCs) in the inner mitochondrial membrane with ubiquinol-cytochrome c oxidoreductase (cytochrome b-c1 complex, complex III, CIII).

The protein resides in the mitochondrion inner membrane. It carries out the reaction 4 Fe(II)-[cytochrome c] + O2 + 8 H(+)(in) = 4 Fe(III)-[cytochrome c] + 2 H2O + 4 H(+)(out). Component of the cytochrome c oxidase, the last enzyme in the mitochondrial electron transport chain which drives oxidative phosphorylation. The respiratory chain contains 3 multisubunit complexes succinate dehydrogenase (complex II, CII), ubiquinol-cytochrome c oxidoreductase (cytochrome b-c1 complex, complex III, CIII) and cytochrome c oxidase (complex IV, CIV), that cooperate to transfer electrons derived from NADH and succinate to molecular oxygen, creating an electrochemical gradient over the inner membrane that drives transmembrane transport and the ATP synthase. Cytochrome c oxidase is the component of the respiratory chain that catalyzes the reduction of oxygen to water. Electrons originating from reduced cytochrome c in the intermembrane space (IMS) are transferred via the dinuclear copper A center (CU(A)) of subunit 2 and heme A of subunit 1 to the active site in subunit 1, a binuclear center (BNC) formed by heme A3 and copper B (CU(B)). The BNC reduces molecular oxygen to 2 water molecules using 4 electrons from cytochrome c in the IMS and 4 protons from the mitochondrial matrix. The protein is Cytochrome c oxidase subunit 3 (COX3) of Kluyveromyces lactis (strain ATCC 8585 / CBS 2359 / DSM 70799 / NBRC 1267 / NRRL Y-1140 / WM37) (Yeast).